The sequence spans 214 residues: Cytochrome b (214 aa).

Helical transmembrane passes span 31 to 51 (FGSM…FLAI), 75 to 96 (WTMQ…YIHI), 111 to 131 (WLSG…GYVL), and 176 to 196 (FFAL…AHIM). His81 and His95 together coordinate heme b. Heme b contacts are provided by His180 and His194. His199 contacts a ubiquinone.

It belongs to the cytochrome b family. The cytochrome bc1 complex contains 3 respiratory subunits (MT-CYB, CYC1 and UQCRFS1), 2 core proteins (UQCRC1 and UQCRC2) and probably 6 low-molecular weight proteins. Requires heme b as cofactor.

The protein localises to the mitochondrion inner membrane. In terms of biological role, component of the ubiquinol-cytochrome c reductase complex (complex III or cytochrome b-c1 complex) that is part of the mitochondrial respiratory chain. The b-c1 complex mediates electron transfer from ubiquinol to cytochrome c. Contributes to the generation of a proton gradient across the mitochondrial membrane that is then used for ATP synthesis. In Elapsoidea semiannulata (Angolan garter snake), this protein is Cytochrome b (MT-CYB).